The following is a 320-amino-acid chain: o-succinylbenzoate synthase (320 aa).

Lysine 133 acts as the Proton donor in catalysis. Aspartate 161, glutamate 190, and aspartate 213 together coordinate Mg(2+). Catalysis depends on lysine 235, which acts as the Proton acceptor.

It belongs to the mandelate racemase/muconate lactonizing enzyme family. MenC type 1 subfamily. Requires a divalent metal cation as cofactor.

The enzyme catalyses (1R,6R)-6-hydroxy-2-succinyl-cyclohexa-2,4-diene-1-carboxylate = 2-succinylbenzoate + H2O. It participates in quinol/quinone metabolism; 1,4-dihydroxy-2-naphthoate biosynthesis; 1,4-dihydroxy-2-naphthoate from chorismate: step 4/7. Its pathway is quinol/quinone metabolism; menaquinone biosynthesis. In terms of biological role, converts 2-succinyl-6-hydroxy-2,4-cyclohexadiene-1-carboxylate (SHCHC) to 2-succinylbenzoate (OSB). The chain is o-succinylbenzoate synthase from Escherichia fergusonii (strain ATCC 35469 / DSM 13698 / CCUG 18766 / IAM 14443 / JCM 21226 / LMG 7866 / NBRC 102419 / NCTC 12128 / CDC 0568-73).